Reading from the N-terminus, the 200-residue chain is Transcription elongation factor A protein-like 5 (200 aa).

5 stretches are compositionally biased toward basic and acidic residues: residues 1–49 (MEKF…KLEV), 61–85 (GEGK…KPDS), 94–106 (RAAE…DYVP), 114–153 (DRGT…EELR), and 190–200 (GQKDLEDAPFV). The tract at residues 1–200 (MEKFYKENEG…QKDLEDAPFV (200 aa)) is disordered.

The protein belongs to the TFS-II family. TFA subfamily.

It localises to the nucleus. May be involved in transcriptional regulation. In Mus musculus (Mouse), this protein is Transcription elongation factor A protein-like 5 (Tceal5).